We begin with the raw amino-acid sequence, 204 residues long: Small ribosomal subunit protein uS4c (204 aa).

One can recognise an S4 RNA-binding domain in the interval 90–150 (MRLDNILYRL…GKKTDQLKTI (61 aa)).

This sequence belongs to the universal ribosomal protein uS4 family. In terms of assembly, part of the 30S ribosomal subunit. Contacts protein S5. The interaction surface between S4 and S5 is involved in control of translational fidelity.

It is found in the plastid. The protein localises to the chloroplast. Functionally, one of the primary rRNA binding proteins, it binds directly to 16S rRNA where it nucleates assembly of the body of the 30S subunit. Its function is as follows. With S5 and S12 plays an important role in translational accuracy. The chain is Small ribosomal subunit protein uS4c (rps4) from Gnetum parvifolium (Small-leaved jointfir).